The following is a 488-amino-acid chain: Glutamyl-tRNA(Gln) amidotransferase subunit A (488 aa).

Residues Lys77 and Ser152 each act as charge relay system in the active site. Residue Ser176 is the Acyl-ester intermediate of the active site.

This sequence belongs to the amidase family. GatA subfamily. Heterotrimer of A, B and C subunits.

It catalyses the reaction L-glutamyl-tRNA(Gln) + L-glutamine + ATP + H2O = L-glutaminyl-tRNA(Gln) + L-glutamate + ADP + phosphate + H(+). In terms of biological role, allows the formation of correctly charged Gln-tRNA(Gln) through the transamidation of misacylated Glu-tRNA(Gln) in organisms which lack glutaminyl-tRNA synthetase. The reaction takes place in the presence of glutamine and ATP through an activated gamma-phospho-Glu-tRNA(Gln). In Streptococcus equi subsp. zooepidemicus (strain H70), this protein is Glutamyl-tRNA(Gln) amidotransferase subunit A.